The sequence spans 566 residues: MPYLLLFALLFALNAPLARAASCPQWSPQQAKAEVAQLRATLARWDEHYHRQGIALVADELYDQSRERLNHLQQCFAVGTSPSPLASARGPVPHPVPHTGVDKLADRQAVARWMAGKSGVWVQPKVDGVAVSLTYQQGRLVQLTSRGDGVNGHDWSRHIPQLDAVTRQLPEALDLHLQGELYLRLSDHVQAKAGSANARGTVAGLLARKQLTGAQGNAIGLFVWGWPHGPEQQAERLAQLARLGFPDSQLYSIAIDTLEDAAHWREHWYRSALPFATDGVILRQSSRPPAERWQAKAPYWIAAWKYPYAQALAEVRDVRFRVGRTGRVTPVLHLLPVTLDDRRITQVSLGSLARWHTLDIRPGDQVAISLAGLTIPRLEQVVHRTVERQAVAAPAPDRYHAHSCWQASEGCDEQFIARLTWLGGKQGLALPRTGPGTWRRLVEAGLVTSMTDWLQLDAERLQQAPGISRLTAAHLLGSFDEARSRPFDQWLRALGVPIGKHLPLTGDWQALASRSAGHWQTVPGIGAKRSRQLVEFFAASEVQAIAAQLAETGIEGFRPPPQRIEQ.

The active-site N6-AMP-lysine intermediate is Lys-125.

Belongs to the NAD-dependent DNA ligase family. LigB subfamily.

The enzyme catalyses NAD(+) + (deoxyribonucleotide)n-3'-hydroxyl + 5'-phospho-(deoxyribonucleotide)m = (deoxyribonucleotide)n+m + AMP + beta-nicotinamide D-nucleotide.. Catalyzes the formation of phosphodiester linkages between 5'-phosphoryl and 3'-hydroxyl groups in double-stranded DNA using NAD as a coenzyme and as the energy source for the reaction. The protein is DNA ligase B of Pseudomonas putida (strain ATCC 700007 / DSM 6899 / JCM 31910 / BCRC 17059 / LMG 24140 / F1).